The following is a 69-amino-acid chain: Cytochrome c oxidase subunit 8A, mitochondrial (69 aa).

The N-terminal 25 residues, 1 to 25, are a transit peptide targeting the mitochondrion; that stretch reads MSVLTPLLLRGLTGSARRLPVPRAK. The SIFI-degron signature appears at 2-19; that stretch reads SVLTPLLLRGLTGSARRL. At 26–36 the chain is on the mitochondrial matrix side; it reads IHSLPPDEKLG. Residues 37–60 form a helical membrane-spanning segment; that stretch reads IMELAVGLTSCFVTFLLPAGWILS. Residues 61–69 lie on the Mitochondrial intermembrane side of the membrane; the sequence is HLETYRRPE.

This sequence belongs to the cytochrome c oxidase VIII family. As to quaternary structure, component of the cytochrome c oxidase (complex IV, CIV), a multisubunit enzyme composed of 14 subunits. The complex is composed of a catalytic core of 3 subunits MT-CO1, MT-CO2 and MT-CO3, encoded in the mitochondrial DNA, and 11 supernumerary subunits COX4I, COX5A, COX5B, COX6A, COX6B, COX6C, COX7A, COX7B, COX7C, COX8 and NDUFA4, which are encoded in the nuclear genome. The complex exists as a monomer or a dimer and forms supercomplexes (SCs) in the inner mitochondrial membrane with NADH-ubiquinone oxidoreductase (complex I, CI) and ubiquinol-cytochrome c oxidoreductase (cytochrome b-c1 complex, complex III, CIII), resulting in different assemblies (supercomplex SCI(1)III(2)IV(1) and megacomplex MCI(2)III(2)IV(2)). In terms of processing, in response to mitochondrial stress, the precursor protein is ubiquitinated by the SIFI complex in the cytoplasm before mitochondrial import, leading to its degradation. Within the SIFI complex, UBR4 initiates ubiquitin chain that are further elongated or branched by KCMF1.

Its subcellular location is the mitochondrion inner membrane. It participates in energy metabolism; oxidative phosphorylation. Functionally, component of the cytochrome c oxidase, the last enzyme in the mitochondrial electron transport chain which drives oxidative phosphorylation. The respiratory chain contains 3 multisubunit complexes succinate dehydrogenase (complex II, CII), ubiquinol-cytochrome c oxidoreductase (cytochrome b-c1 complex, complex III, CIII) and cytochrome c oxidase (complex IV, CIV), that cooperate to transfer electrons derived from NADH and succinate to molecular oxygen, creating an electrochemical gradient over the inner membrane that drives transmembrane transport and the ATP synthase. Cytochrome c oxidase is the component of the respiratory chain that catalyzes the reduction of oxygen to water. Electrons originating from reduced cytochrome c in the intermembrane space (IMS) are transferred via the dinuclear copper A center (CU(A)) of subunit 2 and heme A of subunit 1 to the active site in subunit 1, a binuclear center (BNC) formed by heme A3 and copper B (CU(B)). The BNC reduces molecular oxygen to 2 water molecules using 4 electrons from cytochrome c in the IMS and 4 protons from the mitochondrial matrix. The chain is Cytochrome c oxidase subunit 8A, mitochondrial (COX8A) from Gorilla gorilla gorilla (Western lowland gorilla).